The sequence spans 359 residues: Photosystem II protein D1 1 (359 aa).

3 consecutive transmembrane segments (helical) span residues 29–46 (YVGW…AATT), 118–133 (HFLI…EWEL), and 142–156 (WICV…AASA). Histidine 118 contributes to the chlorophyll a binding site. Residue tyrosine 126 participates in pheophytin a binding. 2 residues coordinate [CaMn4O5] cluster: aspartate 170 and glutamate 189. A helical membrane pass occupies residues 197–218 (FHMMGVAGVFGGSLFSAMHGSL). Histidine 198 provides a ligand contact to chlorophyll a. A quinone contacts are provided by residues histidine 215 and 264-265 (SF). Fe cation is bound at residue histidine 215. Fe cation is bound at residue histidine 272. A helical transmembrane segment spans residues 274 to 288 (FLAAWPVVGIWFTAL). The [CaMn4O5] cluster site is built by histidine 332, glutamate 333, aspartate 342, and alanine 344. Positions 345–359 (AAESTPVALQAPAIG) are excised as a propeptide.

It belongs to the reaction center PufL/M/PsbA/D family. In terms of assembly, PSII is composed of 1 copy each of membrane proteins PsbA, PsbB, PsbC, PsbD, PsbE, PsbF, PsbH, PsbI, PsbJ, PsbK, PsbL, PsbM, PsbT, PsbX, PsbY, PsbZ, Psb30/Ycf12, peripheral proteins PsbO, CyanoQ (PsbQ), PsbU, PsbV and a large number of cofactors. It forms dimeric complexes. It depends on The D1/D2 heterodimer binds P680, chlorophylls that are the primary electron donor of PSII, and subsequent electron acceptors. It shares a non-heme iron and each subunit binds pheophytin, quinone, additional chlorophylls, carotenoids and lipids. D1 provides most of the ligands for the Mn4-Ca-O5 cluster of the oxygen-evolving complex (OEC). There is also a Cl(-1) ion associated with D1 and D2, which is required for oxygen evolution. The PSII complex binds additional chlorophylls, carotenoids and specific lipids. as a cofactor. In terms of processing, tyr-161 forms a radical intermediate that is referred to as redox-active TyrZ, YZ or Y-Z. C-terminally processed by CtpA; processing is essential to allow assembly of the oxygen-evolving complex and thus photosynthetic growth.

It is found in the cellular thylakoid membrane. The enzyme catalyses 2 a plastoquinone + 4 hnu + 2 H2O = 2 a plastoquinol + O2. Functionally, photosystem II (PSII) is a light-driven water:plastoquinone oxidoreductase that uses light energy to abstract electrons from H(2)O, generating O(2) and a proton gradient subsequently used for ATP formation. It consists of a core antenna complex that captures photons, and an electron transfer chain that converts photonic excitation into a charge separation. The D1/D2 (PsbA/PsbD) reaction center heterodimer binds P680, the primary electron donor of PSII as well as several subsequent electron acceptors. The sequence is that of Photosystem II protein D1 1 from Synechococcus sp. (strain WH7803).